A 728-amino-acid polypeptide reads, in one-letter code: U-box domain-containing protein 4 (728 aa).

The U-box domain maps to 296–370 (SVPKEFSCPI…SQWCGVYGLQ (75 aa)). ARM repeat units lie at residues 441 to 483 (GAIP…EQEG) and 526 to 568 (GAVE…ESCA).

The enzyme catalyses S-ubiquitinyl-[E2 ubiquitin-conjugating enzyme]-L-cysteine + [acceptor protein]-L-lysine = [E2 ubiquitin-conjugating enzyme]-L-cysteine + N(6)-ubiquitinyl-[acceptor protein]-L-lysine.. The protein operates within protein modification; protein ubiquitination. Functionally, possesses E3 ubiquitin-protein ligase in vitro. This is U-box domain-containing protein 4 (PUB4) from Oryza sativa subsp. japonica (Rice).